Reading from the N-terminus, the 876-residue chain is Alanine--tRNA ligase (876 aa).

Residue lysine 74 is modified to N6-acetyllysine. Zn(2+) contacts are provided by histidine 564, histidine 568, cysteine 666, and histidine 670.

It belongs to the class-II aminoacyl-tRNA synthetase family. In terms of assembly, homotetramer. It depends on Zn(2+) as a cofactor.

It is found in the cytoplasm. The catalysed reaction is tRNA(Ala) + L-alanine + ATP = L-alanyl-tRNA(Ala) + AMP + diphosphate. Its function is as follows. Catalyzes the attachment of alanine to tRNA(Ala) in a two-step reaction: alanine is first activated by ATP to form Ala-AMP and then transferred to the acceptor end of tRNA(Ala). Also edits incorrectly charged Ser-tRNA(Ala) and Gly-tRNA(Ala) via its editing domain. In Escherichia coli O157:H7, this protein is Alanine--tRNA ligase.